A 164-amino-acid polypeptide reads, in one-letter code: NADH-quinone oxidoreductase subunit I (164 aa).

4Fe-4S ferredoxin-type domains are found at residues 55–85 (LRRY…IDAE) and 95–124 (TRYD…EGPN). Positions 65, 68, 71, 75, 104, 107, 110, and 114 each coordinate [4Fe-4S] cluster.

This sequence belongs to the complex I 23 kDa subunit family. As to quaternary structure, NDH-1 is composed of 14 different subunits. Subunits NuoA, H, J, K, L, M, N constitute the membrane sector of the complex. [4Fe-4S] cluster serves as cofactor.

It localises to the cell inner membrane. It catalyses the reaction a quinone + NADH + 5 H(+)(in) = a quinol + NAD(+) + 4 H(+)(out). Functionally, NDH-1 shuttles electrons from NADH, via FMN and iron-sulfur (Fe-S) centers, to quinones in the respiratory chain. The immediate electron acceptor for the enzyme in this species is believed to be ubiquinone. Couples the redox reaction to proton translocation (for every two electrons transferred, four hydrogen ions are translocated across the cytoplasmic membrane), and thus conserves the redox energy in a proton gradient. This is NADH-quinone oxidoreductase subunit I from Ruegeria sp. (strain TM1040) (Silicibacter sp.).